Reading from the N-terminus, the 1166-residue chain is MAPTLFQKLFSKRTGLGAPGRDARDPDCGFSWPLPEFDPSQIRLIVYQDCERRGRNVLFDSSVKRRNEDISVSKLGSDAQVKVFGKCCQLKPGGDSSSSLDSSVTSSSDIKDQCLKYQGSRCSSDANMLGEMMFGSVAMSYKGSTLKIHQIRSPPQLMLSKVFTARTGSSICGSLNTLQDSLEFINQDNNTLKADNNTVINGLLGNIGLSQFCSPRRAFSEQGPLRLIRSASFFAVHSNPMDMPGRELNEDRDSGIARSASLSSLLITPFPSPNSSLTRSCASSYQRRWRRSQTTSLENGVFPRWSIEESFNLSDESCGPNPGIVRKKKIAIGVIFSLSKDEDENNKFNEFFFSHFPLFESHMNKLKSAIEQAMKMSRRSADASQRSLAYNRIVDALNEFRTTICNLYTMPRIGEPVWLTMMSGTPEKNHLCYRFMKEFTFLMENASKNQFLPALITAVLTNHLAWVPTVMPNGQPPIKIFLEKHSSQSVDMLAKTHPYNPLWAQLGDLYGAIGSPVRLARTVVVGKRQDMVQRLLYFLTYFIRCSELQETHLLENGEDEAIVMPGTVITTTLEKGEIEESEYVLVTMHRNKSSLLFKESEEIRTPNCNCKYCSHPLLGQNVENISQQEREDIQNSSKELLGISDECQMISPSDCQEENAVDVKQYRDKLRTCFDAKLETVVCTGSVPVDKCALSESGLESTEETWQSEKLLDSDSHTGKAMRSTGMVVEKKPPDKIVPASFSCEAAQTKVTFLIGDSMSPDSDTELRSQAVVDQITRHHTKPLKEERGAIDQHQETKQTTKDQSGESDTQNMVSEEPCELPCWNHSDPESMSLFDEYFNDDSIETRTIDDVPFKTSTDSKDHCCMLEFSKILCTKNNKQNNEFCKCIETVPQDSCKTCFPQQDQRDTLSILVPHGDKESSDKKIAVGTEWDIPRNESSDSALGDSESEDTGHDMTRQVSSYYGGEQEDWAEEDEIPFPGSKLIEVSAVQPNIANFGRSLLGGYCSSYVPDFVLQGIGSDERFRQCLMSDLSHAVQHPVLDEPIAEAVCIIADMDKWTVQVASSQRRVTDNKLGKEVLVSSLVSNLLHSTLQLYKHNLSPNFCVMHLEDRLQELYFKSKMLSEYLRGQMRVHVKELGVVLGIESSDLPLLAAVASTHSPYVAQILL.

The region spanning 37–478 is the uDENN FNIP1/2-type domain; sequence FDPSQIRLIV…TVMPNGQPPI (442 aa). A phosphoserine; by AMPK mark is found at Ser-220, Ser-230, Ser-232, and Ser-261. Thr-294 bears the Phosphothreonine mark. The residue at position 296 (Ser-296) is a Phosphoserine. Positions 486–1092 constitute a cDENN FNIP1/2-type domain; it reads SSQSVDMLAK…VSNLLHSTLQ (607 aa). Residue Ser-593 is modified to Phosphoserine; by AMPK. Ser-594 is subject to Phosphoserine. Zn(2+)-binding residues include Cys-608 and Cys-610. Residues 608–615 carry the Cys degron motif; the sequence is CNCKYCSH. Positions 611-612 are KY-finger; sequence KY. Zn(2+)-binding residues include Cys-613 and His-615. 2 positions are modified to phosphoserine: Ser-760 and Ser-763. Disordered stretches follow at residues 781–817 and 912–956; these read TKPL…VSEE and LVPH…HDMT. Basic and acidic residues-rich tracts occupy residues 783–805 and 915–925; these read PLKE…KDQS and HGDKESSDKKI. Residues 929–1166 are interaction with HSP90AA1; sequence TEWDIPRNES…HSPYVAQILL (238 aa). At Ser-938 the chain carries Phosphoserine; alternate; by CK2. Residue Ser-938 is glycosylated (O-linked (GlcNAc) serine; alternate). A phosphoserine; by CK2 mark is found at Ser-939, Ser-941, Ser-946, and Ser-948. Residues 1102–1157 enclose the dDENN FNIP1/2-type domain; that stretch reads FCVMHLEDRLQELYFKSKMLSEYLRGQMRVHVKELGVVLGIESSDLPLLAAVASTH. Residue Lys-1119 forms a Glycyl lysine isopeptide (Lys-Gly) (interchain with G-Cter in ubiquitin) linkage.

It belongs to the FNIP family. As to quaternary structure, homodimer and homomultimer. Heterodimer and heteromultimer with FNIP2. Interacts with FLCN (via C-terminus). Component of the lysosomal folliculin complex (LFC), composed of FLCN, FNIP1 (or FNIP2), RagA/RRAGA or RagB/RRAGB GDP-bound, RagC/RRAGC or RagD/RRAGD GTP-bound, and Ragulator. Interacts with HSPCA and with the PRKAA1, PRKAB1 and PRKAG1 subunits of 5'-AMP-activated protein kinase (AMPK). Phosphorylated FLCN and AMPK are preferentially bound. Interacts with HSP70, STIP1, PTGES3, CDC37, BRAF, GCR and CDK4. Interacts with HSP90AA1; the interaction inhibits HSP90AA1 ATPase activity. Interacts with ATP2A2. Post-translationally, phosphorylated by AMPK in response to energetic stress. Phosphorylation by AMPK in response to mitochondrial damage promotes inactivation of the non-canonical mTORC1 signaling, nuclear translocation of TFEB and TFE3, inducing transcription of lysosomal or autophagy genes. Sequential phosphorylation by CK2 promotes its gradual interaction with HSP90AA1/Hsp90. Priming phosphorylation at Ser-938 is followed by relay phosphorylation at Ser-939, Ser-941, Ser-946 and Ser-948, promoting its gradual interaction with HSP90AA1/Hsp90. This leads to incremental inhibition of HSP90AA1/Hsp90 ATPase activity and gradual activation of both kinase and non-kinase clients. Dephosphorylated by protein phosphatase 5 (PP5), promoting glycosylation by OGT. GlcNAcylation at Ser-938 by OGT following dephosphorylation by protein phosphatase 5 (PP5) promotes ubiquitination and degradation by the proteasome. In terms of processing, ubiquitinated through 'Lys-11' linkage of ubiquitin moieties at Lys-1119 following glycosylation by OGT, leading to its degradation by the proteasome. Ubiquitinated by the CRL2(FEM1B) complex in response to reductive stress: reductive stress causes reduction of the conserved Cys degron in FNIP1, followed by zinc-binding, zinc acting as a molecular glue for recognition by the CRL2(FEM1B) complex. Ubiquitination leads to FNIP1 degradation, and activation of mitochondria to recalibrate reactive oxygen species (ROS). Post-translationally, oxidation of the Cys degron in normal conditions promotes its stabilization by preventing recognition and ubiquitination by the CRL2(FEM1B) complex. As to expression, strong expression is found in the heart, liver placenta, muscle, nasal mucosa, salivary gland and uvula and moderate expression in kidney and lung. Higher levels detected in clear cell renal cell carcinoma (RCC) and chromophobe RCC than in normal kidney tissue. Expressed in peripheral blood mononuclear cells.

The protein resides in the lysosome membrane. Its subcellular location is the cytoplasm. It localises to the cytosol. Its function is as follows. Binding partner of the GTPase-activating protein FLCN: involved in the cellular response to amino acid availability by regulating the non-canonical mTORC1 signaling cascade controlling the MiT/TFE factors TFEB and TFE3. Required to promote FLCN recruitment to lysosomes and interaction with Rag GTPases, leading to activation of the non-canonical mTORC1 signaling. In low-amino acid conditions, component of the lysosomal folliculin complex (LFC) on the membrane of lysosomes, which inhibits the GTPase-activating activity of FLCN, thereby inactivating mTORC1 and promoting nuclear translocation of TFEB and TFE3. Upon amino acid restimulation, disassembly of the LFC complex liberates the GTPase-activating activity of FLCN, leading to activation of mTORC1 and subsequent inactivation of TFEB and TFE3. Together with FLCN, regulates autophagy: following phosphorylation by ULK1, interacts with GABARAP and promotes autophagy. In addition to its role in mTORC1 signaling, also acts as a co-chaperone of HSP90AA1/Hsp90: following gradual phosphorylation by CK2, inhibits the ATPase activity of HSP90AA1/Hsp90, leading to activate both kinase and non-kinase client proteins of HSP90AA1/Hsp90. Acts as a scaffold to load client protein FLCN onto HSP90AA1/Hsp90. Competes with the activating co-chaperone AHSA1 for binding to HSP90AA1, thereby providing a reciprocal regulatory mechanism for chaperoning of client proteins. Also acts as a core component of the reductive stress response by inhibiting activation of mitochondria in normal conditions: in response to reductive stress, the conserved Cys degron is reduced, leading to recognition and polyubiquitylation by the CRL2(FEM1B) complex, followed by proteasomal. Required for B-cell development. This Homo sapiens (Human) protein is Folliculin-interacting protein 1.